Here is a 512-residue protein sequence, read N- to C-terminus: N-acetyltryptophan 6-hydroxylase ivoC (512 aa).

The chain crosses the membrane as a helical span at residues 6–26; sequence LVFSFPAWALLLVLTLLYTLY. Asparagine 118 is a glycosylation site (N-linked (GlcNAc...) asparagine). Cysteine 453 provides a ligand contact to heme.

Belongs to the cytochrome P450 family. Heme is required as a cofactor.

It localises to the membrane. The protein operates within pigment biosynthesis. N-acetyltryptophan 6-hydroxylase; part of the pathway that mediates the biosynthesis of the gray-brown conidiophore pigment. The first step of the pathway is performed by the nonribosomal peptide synthetase ivoA that catalyzes ATP-dependent unidirectional stereoinversion of L-tryptophan to D-tryptophan with complete conversion. While the stereoinversion is catalyzed by the epimerization (E) domain of ivoA, the terminal condensation (C) domain stereoselectively hydrolyzes D-tryptophanyl-S-phosphopantetheine thioester and thus represents a non-canonical C domain function. D-tryptophan is acetylated, probably by an endogenous acetyltransferase. N-acetyltryptophan is further 6-hydroxylated into N-acetyl-6-hydroxytryptophan (AHT) by the cytochrome P450 monooxygenase ivoC. N-acetyl-6-hydroxytryptophan is substrate of the N-acetyl-6-hydroxytryptophan oxidase ivoB to produce the gray-brown conidiophore pigment. The polypeptide is N-acetyltryptophan 6-hydroxylase ivoC (Emericella nidulans (strain FGSC A4 / ATCC 38163 / CBS 112.46 / NRRL 194 / M139) (Aspergillus nidulans)).